Reading from the N-terminus, the 117-residue chain is Ig heavy chain V region 3 (117 aa).

Residues 1–19 form the signal peptide; it reads MGWSCIILFLVATATGVHS. Residues 20–49 are framework-1; that stretch reads QVQLQQPGAELVRPGSSVKLSCKASGYTFT. An intrachain disulfide couples Cys41 to Cys115. Residues 50–54 form a complementarity-determining-1 region; that stretch reads SYWMD. Residues 55-68 are framework-2; that stretch reads WVKQRPGQGLEWIG. A complementarity-determining-2 region spans residues 69–85; it reads NIYPSDSETHYNQKFKD. A framework-3 region spans residues 86-117; that stretch reads KATLTVDKSSSTAYMQLSSLTSEDSAVYYCAR.

The polypeptide is Ig heavy chain V region 3 (Ighv1-61) (Mus musculus (Mouse)).